A 445-amino-acid chain; its full sequence is Selenocysteine lyase (445 aa).

M1 carries the N-acetylmethionine modification. The interval 1-28 is disordered; the sequence is MEAAVAPGRDAPAPAASQPSGCGKHNSP. S129 carries the phosphoserine modification. K259 bears the N6-(pyridoxal phosphate)lysine mark. The S-selanylcysteine intermediate role is filled by C388.

Belongs to the class-V pyridoxal-phosphate-dependent aminotransferase family. In terms of assembly, homodimer. The cofactor is pyridoxal 5'-phosphate.

It localises to the cytoplasm. The protein localises to the cytosol. It carries out the reaction L-selenocysteine + AH2 = hydrogenselenide + L-alanine + A + H(+). In terms of biological role, catalyzes the decomposition of L-selenocysteine to L-alanine and elemental selenium. The polypeptide is Selenocysteine lyase (SCLY) (Homo sapiens (Human)).